The sequence spans 72 residues: Large ribosomal subunit protein bL31 (72 aa).

This sequence belongs to the bacterial ribosomal protein bL31 family. Type A subfamily. In terms of assembly, part of the 50S ribosomal subunit.

Binds the 23S rRNA. The sequence is that of Large ribosomal subunit protein bL31 from Deinococcus deserti (strain DSM 17065 / CIP 109153 / LMG 22923 / VCD115).